The chain runs to 196 residues: MKNILRPALVLFFVLTLLTGVAYPLAVTGAAQLLFPAQAAGSLILRDGKPVGSSLIGQNFTDPGHFWGRPSATGPMPYNASASGGSNLGPLNPALLDAVKGRIDALRAADPGNAAAVPVDLVTASASGLDPHISPAAASYQAARVARVRGLPLEKVRQLVAQETETPWLGLLGEARVHVLKLNLALDALKPVNAPG.

The chain crosses the membrane as a helical span at residues 7 to 27 (PALVLFFVLTLLTGVAYPLAV).

Belongs to the KdpC family. The system is composed of three essential subunits: KdpA, KdpB and KdpC.

The protein localises to the cell inner membrane. Its function is as follows. Part of the high-affinity ATP-driven potassium transport (or Kdp) system, which catalyzes the hydrolysis of ATP coupled with the electrogenic transport of potassium into the cytoplasm. This subunit acts as a catalytic chaperone that increases the ATP-binding affinity of the ATP-hydrolyzing subunit KdpB by the formation of a transient KdpB/KdpC/ATP ternary complex. In Polaromonas naphthalenivorans (strain CJ2), this protein is Potassium-transporting ATPase KdpC subunit.